The following is a 90-amino-acid chain: Cuticle protein 9.5 (90 aa).

Its function is as follows. Component of the cuticle of migratory locust which contains more than 100 different structural proteins. The protein is Cuticle protein 9.5 of Locusta migratoria (Migratory locust).